The primary structure comprises 347 residues: Methylthioribose-1-phosphate isomerase (347 aa).

Substrate contacts are provided by residues 45–47, Arg88, and Gln197; that span reads RGA. Asp238 (proton donor) is an active-site residue. 248–249 is a binding site for substrate; that stretch reads NK.

The protein belongs to the eIF-2B alpha/beta/delta subunits family. MtnA subfamily.

The enzyme catalyses 5-(methylsulfanyl)-alpha-D-ribose 1-phosphate = 5-(methylsulfanyl)-D-ribulose 1-phosphate. It participates in amino-acid biosynthesis; L-methionine biosynthesis via salvage pathway; L-methionine from S-methyl-5-thio-alpha-D-ribose 1-phosphate: step 1/6. Its function is as follows. Catalyzes the interconversion of methylthioribose-1-phosphate (MTR-1-P) into methylthioribulose-1-phosphate (MTRu-1-P). The polypeptide is Methylthioribose-1-phosphate isomerase (Nostoc sp. (strain PCC 7120 / SAG 25.82 / UTEX 2576)).